The following is a 61-amino-acid chain: Small ribosomal subunit protein uS14B (61 aa).

Residues cysteine 24, cysteine 27, cysteine 40, and cysteine 43 each contribute to the Zn(2+) site.

The protein belongs to the universal ribosomal protein uS14 family. Zinc-binding uS14 subfamily. As to quaternary structure, part of the 30S ribosomal subunit. Contacts proteins S3 and S10. The cofactor is Zn(2+).

Its function is as follows. Binds 16S rRNA, required for the assembly of 30S particles and may also be responsible for determining the conformation of the 16S rRNA at the A site. This chain is Small ribosomal subunit protein uS14B, found in Streptomyces avermitilis (strain ATCC 31267 / DSM 46492 / JCM 5070 / NBRC 14893 / NCIMB 12804 / NRRL 8165 / MA-4680).